The sequence spans 181 residues: Peptide deformylase (181 aa).

Fe cation is bound by residues Cys104 and His146. The active site involves Glu147. A Fe cation-binding site is contributed by His150.

Belongs to the polypeptide deformylase family. It depends on Fe(2+) as a cofactor.

The catalysed reaction is N-terminal N-formyl-L-methionyl-[peptide] + H2O = N-terminal L-methionyl-[peptide] + formate. Its function is as follows. Removes the formyl group from the N-terminal Met of newly synthesized proteins. Requires at least a dipeptide for an efficient rate of reaction. N-terminal L-methionine is a prerequisite for activity but the enzyme has broad specificity at other positions. In Helicobacter hepaticus (strain ATCC 51449 / 3B1), this protein is Peptide deformylase.